A 248-amino-acid polypeptide reads, in one-letter code: Sugar fermentation stimulation protein homolog (248 aa).

Belongs to the SfsA family.

This is Sugar fermentation stimulation protein homolog from Prochlorococcus marinus subsp. pastoris (strain CCMP1986 / NIES-2087 / MED4).